An 81-amino-acid chain; its full sequence is Small ribosomal subunit protein bS18 (81 aa).

It belongs to the bacterial ribosomal protein bS18 family. As to quaternary structure, part of the 30S ribosomal subunit. Forms a tight heterodimer with protein bS6.

Binds as a heterodimer with protein bS6 to the central domain of the 16S rRNA, where it helps stabilize the platform of the 30S subunit. The chain is Small ribosomal subunit protein bS18 from Desulfotalea psychrophila (strain LSv54 / DSM 12343).